The sequence spans 237 residues: Ribosomal RNA small subunit methyltransferase G (237 aa).

Residues Gly76, Phe81, 128 to 129 (VE), and Arg147 contribute to the S-adenosyl-L-methionine site.

The protein belongs to the methyltransferase superfamily. RNA methyltransferase RsmG family.

The protein localises to the cytoplasm. In terms of biological role, specifically methylates the N7 position of a guanine in 16S rRNA. The protein is Ribosomal RNA small subunit methyltransferase G of Prochlorococcus marinus (strain MIT 9215).